Reading from the N-terminus, the 243-residue chain is Anti-H(O) lectin 1 (243 aa).

Asparagine 10 carries an N-linked (GlcNAc...) asparagine; partial glycan. N-linked (GlcNAc...) asparagine glycosylation occurs at asparagine 116. Glutamate 126 and aspartate 128 together coordinate Mn(2+). Positions 128, 135, and 138 each coordinate Ca(2+). Mn(2+) is bound by residues aspartate 138 and histidine 143.

It belongs to the leguminous lectin family.

In terms of biological role, L-fucose specific lectin. In Ulex europaeus (Furze), this protein is Anti-H(O) lectin 1.